Here is a 273-residue protein sequence, read N- to C-terminus: Embryonic polyadenylate-binding protein 2 (273 aa).

The segment at 22–57 is disordered; that stretch reads SSDPEAQGWGAWGRTEKTSLVPRAGSRAGSDKEAEE. Positions 143-220 constitute an RRM domain; it reads RSVFVGNVDY…RVIKVLPKRT (78 aa).

The protein localises to the cytoplasm. Binds the poly(A) tail of mRNA. The sequence is that of Embryonic polyadenylate-binding protein 2 (Pabpn1l) from Mus musculus (Mouse).